The sequence spans 367 residues: Phosphoribosylaminoimidazole-succinocarboxamide synthase (367 aa).

The protein belongs to the SAICAR synthetase family.

The enzyme catalyses 5-amino-1-(5-phospho-D-ribosyl)imidazole-4-carboxylate + L-aspartate + ATP = (2S)-2-[5-amino-1-(5-phospho-beta-D-ribosyl)imidazole-4-carboxamido]succinate + ADP + phosphate + 2 H(+). It participates in purine metabolism; IMP biosynthesis via de novo pathway; 5-amino-1-(5-phospho-D-ribosyl)imidazole-4-carboxamide from 5-amino-1-(5-phospho-D-ribosyl)imidazole-4-carboxylate: step 1/2. The sequence is that of Phosphoribosylaminoimidazole-succinocarboxamide synthase from Vibrio atlanticus (strain LGP32) (Vibrio splendidus (strain Mel32)).